The sequence spans 333 residues: Ribosomal protein L11 methyltransferase (333 aa).

S-adenosyl-L-methionine-binding residues include Thr-160, Gly-181, Asp-203, and Asn-267.

This sequence belongs to the methyltransferase superfamily. PrmA family.

It is found in the cytoplasm. It carries out the reaction L-lysyl-[protein] + 3 S-adenosyl-L-methionine = N(6),N(6),N(6)-trimethyl-L-lysyl-[protein] + 3 S-adenosyl-L-homocysteine + 3 H(+). Functionally, methylates ribosomal protein L11. This Lachnoclostridium phytofermentans (strain ATCC 700394 / DSM 18823 / ISDg) (Clostridium phytofermentans) protein is Ribosomal protein L11 methyltransferase.